The sequence spans 2124 residues: AMB antimetabolite synthetase AmbE (2124 aa).

Positions L456 to I847 are adenylation. The interval D950–V1147 is methyltransferase. Residues A1251 to A1325 form the Carrier 1 domain. O-(pantetheine 4'-phosphoryl)serine is present on S1286. The segment at D1359 to P1780 is condensation. In terms of domain architecture, Carrier 2 spans A1785–D1859. At S1819 the chain carries O-(pantetheine 4'-phosphoryl)serine. A thioesterase region spans residues R1886–R2107.

Belongs to the NRP synthetase family. Pantetheine 4'-phosphate serves as cofactor.

The enzyme catalyses holo-[peptidyl-carrier protein] + L-glutamate + ATP = L-glutamyl-[peptidyl-carrier protein] + AMP + diphosphate. In terms of biological role, involved in the biosynthesis of the antimetabolite L-2-amino-4-methoxy-trans-3-butenoic acid (AMB), a non-proteinogenic amino acid which is toxic for prokaryotes and eukaryotes. Adenylates L-glutamate and loads it onto its first peptidyl carrier domain via a thioester linkage to the phosphopanthetheine moiety. The second peptidyl carrier domain is loaded with a L-alanine activated by AmbB. After formation by AmbB of the L-Glu-L-Ala dipeptide at the first carrier domain of AmbE, the condensation domain of AmbE probably condenses this dipeptide with the L-Ala residue attached at the second carrier domain of AmbE to give the L-Ala-L-Glu-L-Ala tripeptide. The central amino acid, L-Glu, would then undergo a series of modifications to be converted into AMB while the two flanking L-Ala residues remain in place. Finally, the L-Ala-AMB-L-Ala tripeptide is probably released by thioester cleavage via the thioester domain of AmbE. This Pseudomonas aeruginosa (strain ATCC 15692 / DSM 22644 / CIP 104116 / JCM 14847 / LMG 12228 / 1C / PRS 101 / PAO1) protein is AMB antimetabolite synthetase AmbE.